The following is a 399-amino-acid chain: L-asparaginase-like protein GE13669 (399 aa).

The signal sequence occupies residues 1 to 22 (MLAQSCCLRLLILLLLFKSTCS). 3 cysteine pairs are disulfide-bonded: C90/C95, C189/C205, and C344/C371.

This sequence belongs to the Ntn-hydrolase family.

The sequence is that of L-asparaginase-like protein GE13669 from Drosophila yakuba (Fruit fly).